The following is a 114-amino-acid chain: Ribosome-binding factor A (114 aa).

This sequence belongs to the RbfA family. In terms of assembly, monomer. Binds 30S ribosomal subunits, but not 50S ribosomal subunits or 70S ribosomes.

It is found in the cytoplasm. One of several proteins that assist in the late maturation steps of the functional core of the 30S ribosomal subunit. Associates with free 30S ribosomal subunits (but not with 30S subunits that are part of 70S ribosomes or polysomes). Required for efficient processing of 16S rRNA. May interact with the 5'-terminal helix region of 16S rRNA. This is Ribosome-binding factor A from Listeria welshimeri serovar 6b (strain ATCC 35897 / DSM 20650 / CCUG 15529 / CIP 8149 / NCTC 11857 / SLCC 5334 / V8).